The chain runs to 20 residues: Flagellar filament 33 kDa core protein (20 aa).

The protein belongs to the bacterial flagellin family. As to quaternary structure, the flagellum consists of an outer layer composed of repeating units of FlaA around a core that contains one or all of five antigenically related polypeptides.

The protein resides in the periplasmic flagellum. It localises to the periplasm. Its function is as follows. Component of the core of the flagella. This Spirochaeta aurantia protein is Flagellar filament 33 kDa core protein.